Here is a 69-residue protein sequence, read N- to C-terminus: Protein transport protein Sec61 subunit gamma-1 (69 aa).

N-acetylmethionine is present on Met1. Topologically, residues 1-32 (MDAIDSVVDPLRDFAKDSIRLVKRCHKPDRKE) are cytoplasmic. Residues 33 to 61 (FTKVAVRTAIGFVVMGFVGFFVKLIFIPI) traverse the membrane as a helical segment. Residues 62-69 (NNIIVGAT) lie on the Extracellular side of the membrane.

It belongs to the SecE/SEC61-gamma family. In terms of assembly, heterotrimeric complex composed of SEC61-alpha, SEC61-beta and SEC61-gamma.

Its subcellular location is the endoplasmic reticulum membrane. Necessary for protein translocation in the endoplasmic reticulum. In Arabidopsis thaliana (Mouse-ear cress), this protein is Protein transport protein Sec61 subunit gamma-1 (SEC61G1).